The chain runs to 357 residues: DNA replication and repair protein RecF (357 aa).

30 to 37 serves as a coordination point for ATP; that stretch reads GANGSGKT.

Belongs to the RecF family.

Its subcellular location is the cytoplasm. In terms of biological role, the RecF protein is involved in DNA metabolism; it is required for DNA replication and normal SOS inducibility. RecF binds preferentially to single-stranded, linear DNA. It also seems to bind ATP. This chain is DNA replication and repair protein RecF, found in Escherichia coli O6:K15:H31 (strain 536 / UPEC).